Consider the following 185-residue polypeptide: Elongation factor P (185 aa).

It belongs to the elongation factor P family.

Its subcellular location is the cytoplasm. Its pathway is protein biosynthesis; polypeptide chain elongation. Involved in peptide bond synthesis. Stimulates efficient translation and peptide-bond synthesis on native or reconstituted 70S ribosomes in vitro. Probably functions indirectly by altering the affinity of the ribosome for aminoacyl-tRNA, thus increasing their reactivity as acceptors for peptidyl transferase. The polypeptide is Elongation factor P (Mesomycoplasma hyopneumoniae (strain 7448) (Mycoplasma hyopneumoniae)).